We begin with the raw amino-acid sequence, 444 residues long: Glutamyl-tRNA reductase (444 aa).

Residues 49 to 52 (TCNR), Ser109, 114 to 116 (ETQ), and Gln120 contribute to the substrate site. Residue Cys50 is the Nucleophile of the active site. 189 to 194 (GAGKMG) contributes to the NADP(+) binding site.

This sequence belongs to the glutamyl-tRNA reductase family. Homodimer.

The enzyme catalyses (S)-4-amino-5-oxopentanoate + tRNA(Glu) + NADP(+) = L-glutamyl-tRNA(Glu) + NADPH + H(+). Its pathway is porphyrin-containing compound metabolism; protoporphyrin-IX biosynthesis; 5-aminolevulinate from L-glutamyl-tRNA(Glu): step 1/2. Catalyzes the NADPH-dependent reduction of glutamyl-tRNA(Glu) to glutamate 1-semialdehyde (GSA). The protein is Glutamyl-tRNA reductase of Bacillus anthracis (strain A0248).